The primary structure comprises 459 residues: tRNA modification GTPase MnmE (459 aa).

(6S)-5-formyl-5,6,7,8-tetrahydrofolate is bound by residues arginine 29, glutamate 86, and lysine 125. Positions 221–382 (GMNVVIAGRP…LTEHLKAVMG (162 aa)) constitute a TrmE-type G domain. Position 231 (asparagine 231) interacts with K(+). Residues 231–236 (NAGKSS), 250–256 (TNIEGTT), and 275–278 (DTAG) contribute to the GTP site. Serine 235 contacts Mg(2+). K(+) contacts are provided by threonine 250, isoleucine 252, and threonine 255. Threonine 256 is a Mg(2+) binding site. Lysine 459 is a (6S)-5-formyl-5,6,7,8-tetrahydrofolate binding site.

Belongs to the TRAFAC class TrmE-Era-EngA-EngB-Septin-like GTPase superfamily. TrmE GTPase family. Homodimer. Heterotetramer of two MnmE and two MnmG subunits. It depends on K(+) as a cofactor.

The protein localises to the cytoplasm. Functionally, exhibits a very high intrinsic GTPase hydrolysis rate. Involved in the addition of a carboxymethylaminomethyl (cmnm) group at the wobble position (U34) of certain tRNAs, forming tRNA-cmnm(5)s(2)U34. In Marinomonas sp. (strain MWYL1), this protein is tRNA modification GTPase MnmE.